Consider the following 344-residue polypeptide: Phenylalanine--tRNA ligase alpha subunit (344 aa).

Glu-256 is a Mg(2+) binding site.

It belongs to the class-II aminoacyl-tRNA synthetase family. Phe-tRNA synthetase alpha subunit type 1 subfamily. As to quaternary structure, tetramer of two alpha and two beta subunits. The cofactor is Mg(2+).

It localises to the cytoplasm. It catalyses the reaction tRNA(Phe) + L-phenylalanine + ATP = L-phenylalanyl-tRNA(Phe) + AMP + diphosphate + H(+). In Shouchella clausii (strain KSM-K16) (Alkalihalobacillus clausii), this protein is Phenylalanine--tRNA ligase alpha subunit.